A 333-amino-acid chain; its full sequence is Thiamine-monophosphate kinase (333 aa).

Mg(2+) contacts are provided by Asp-35, Thr-50, and Asp-51. His-58 lines the substrate pocket. Asp-80 serves as a coordination point for Mg(2+). ATP contacts are provided by residues Tyr-111, 128 to 129 (GD), and Arg-153. Asp-129 provides a ligand contact to Mg(2+). Asp-230 serves as a coordination point for Mg(2+). An ATP-binding site is contributed by Ser-232. Asp-233 contacts Mg(2+). Substrate contacts are provided by Glu-278 and Phe-330.

It belongs to the thiamine-monophosphate kinase family.

The enzyme catalyses thiamine phosphate + ATP = thiamine diphosphate + ADP. It functions in the pathway cofactor biosynthesis; thiamine diphosphate biosynthesis; thiamine diphosphate from thiamine phosphate: step 1/1. Functionally, catalyzes the ATP-dependent phosphorylation of thiamine-monophosphate (TMP) to form thiamine-pyrophosphate (TPP), the active form of vitamin B1. The protein is Thiamine-monophosphate kinase of Prochlorococcus marinus (strain SARG / CCMP1375 / SS120).